Reading from the N-terminus, the 875-residue chain is Leucine--tRNA ligase (875 aa).

Residues 43 to 53 (PYPSGRIHMGH) carry the 'HIGH' region motif. A 'KMSKS' region motif is present at residues 633–637 (KMSKS). Position 636 (Lys636) interacts with ATP.

It belongs to the class-I aminoacyl-tRNA synthetase family.

The protein localises to the cytoplasm. It carries out the reaction tRNA(Leu) + L-leucine + ATP = L-leucyl-tRNA(Leu) + AMP + diphosphate. The sequence is that of Leucine--tRNA ligase from Bartonella bacilliformis (strain ATCC 35685 / KC583 / Herrer 020/F12,63).